The sequence spans 514 residues: Cytochrome P450 94A1 (514 aa).

The chain crosses the membrane as a helical span at residues 7 to 29 (EVLLPYLLPLLLLILPTTIFFLT). C458 contacts heme.

Belongs to the cytochrome P450 family. Requires heme as cofactor.

It is found in the endoplasmic reticulum membrane. Its function is as follows. Catalyzes the omega-hydroxylation of various fatty acids (FA) from 10 to 18 carbon atoms. The substrate specificity is higher for laurate &gt; palmitate &gt; myristate &gt; linolenate &gt; linoleate &gt; oleate &gt; caprate. May play a minor role in cutin synthesis and could be involved in plant defense. The sequence is that of Cytochrome P450 94A1 (CYP94A1) from Vicia sativa (Spring vetch).